Reading from the N-terminus, the 98-residue chain is NADH-ubiquinone oxidoreductase chain 4L (98 aa).

3 consecutive transmembrane segments (helical) span residues 1-21 (MSLV…GLLM), 29-49 (SLLC…IMIL), and 61-81 (IILL…LVMV).

Belongs to the complex I subunit 4L family. Core subunit of respiratory chain NADH dehydrogenase (Complex I) which is composed of 45 different subunits.

The protein resides in the mitochondrion inner membrane. It catalyses the reaction a ubiquinone + NADH + 5 H(+)(in) = a ubiquinol + NAD(+) + 4 H(+)(out). Core subunit of the mitochondrial membrane respiratory chain NADH dehydrogenase (Complex I) which catalyzes electron transfer from NADH through the respiratory chain, using ubiquinone as an electron acceptor. Part of the enzyme membrane arm which is embedded in the lipid bilayer and involved in proton translocation. This is NADH-ubiquinone oxidoreductase chain 4L (MT-ND4L) from Mogera wogura (Japanese mole).